A 753-amino-acid chain; its full sequence is MFKLFSAFRKDKVWDFNGGIHPPEMKTQSNGTPLRQVSLPQRLIIPLKQHIGAEGELCVKVGDRVLRGQPLTRGWGRMLPVHAPTSGTVTAIAPHTTAHPSGLAEMSVIIDADGEDRWIERDGWSDYQLRTREALIERIHQFGVAGLGGAGFPTGSKLRGGSDKIKTLIINAAECEPYITADDRLMQDCAAQIVDGIRILAHILQPDEVLIGIEDNKPQAISMLRAVLCDAHGISLRVIPTKYPSGGAKQLTQILTGKQVPHGGRSSDIGVLMQNVGTAYAIKRAVIDGEPLTERVVTLTGEAVSRPGNVWARLGTPVRHLLNDAGFCASAEPMVIMGGPLMGFTLPGLDVPVVKITNCLLAPSASEMGEPQEEKGCIRCSACADACPADLLPQQLYWFSKGQQHDKATAHNLADCIECGACAWVCPSNIPLVQYFRQEKAEISAIRQEEQRAAEAKARFEARQARLEREKAARAERHKKAAVQPAAKDQDAINAALARVRDKQRDAAQPIVIQSGAKPDNSEAIAAREARKAEARARKAQQQAASVETPSTDAADPRKAAVEAAIARAKARKAEQQAAPVEAPVAEPVDPRKAAVEAAIARAKARKAEQQVAPVEAPVAEPVDPRKAAVEAAIARAKARKAEQQVAPVEAPVAEPVDPRKAAVEAAIARAKARKAEQQAAPVEAPVAEPVDPRKAAVEAAIARAKARKAEQQAAQPDLASAAANDDPRKAAVAAAIARVQARKATQQAVNEE.

4Fe-4S ferredoxin-type domains are found at residues 367–397 (EMGEPQEEKGCIRCSACADACPADLLPQQLY) and 407–436 (KATAHNLADCIECGACAWVCPSNIPLVQYF). Positions 377, 380, 383, 387, 416, 419, 422, and 426 each coordinate [4Fe-4S] cluster. Disordered regions lie at residues 517 to 561 (AKPD…RKAA), 606 to 625 (RKAEQQVAPVEAPVAEPVDP), 640 to 659 (RKAEQQVAPVEAPVAEPVDP), and 705 to 735 (AKARKAEQQAAQPDLASAAANDDPRKAAVAA). The segment covering 526-537 (AAREARKAEARA) has biased composition (basic and acidic residues). Composition is skewed to low complexity over residues 610-622 (QQVAPVEAPVAEP), 644-656 (QQVAPVEAPVAEP), and 712-735 (QQAAQPDLASAAANDDPRKAAVAA).

This sequence belongs to the 4Fe4S bacterial-type ferredoxin family. RnfC subfamily. The complex is composed of six subunits: RnfA, RnfB, RnfC, RnfD, RnfE and RnfG. [4Fe-4S] cluster serves as cofactor.

The protein localises to the cell inner membrane. In terms of biological role, part of a membrane-bound complex that couples electron transfer with translocation of ions across the membrane. The protein is Ion-translocating oxidoreductase complex subunit C of Klebsiella pneumoniae (strain 342).